The sequence spans 228 residues: Urease accessory protein UreE (228 aa).

The interval 193–228 is disordered; it reads HGSGLHIHGIHSHGDGHSHSHDDHDHDHNHDHDHKH. Basic and acidic residues predominate over residues 204–228; the sequence is SHGDGHSHSHDDHDHDHNHDHDHKH.

It belongs to the UreE family.

It localises to the cytoplasm. Functionally, involved in urease metallocenter assembly. Binds nickel. Probably functions as a nickel donor during metallocenter assembly. The polypeptide is Urease accessory protein UreE (Yersinia rohdei).